The following is a 283-amino-acid chain: ATP synthase gamma chain (283 aa).

It belongs to the ATPase gamma chain family. F-type ATPases have 2 components, CF(1) - the catalytic core - and CF(0) - the membrane proton channel. CF(1) has five subunits: alpha(3), beta(3), gamma(1), delta(1), epsilon(1). CF(0) has three main subunits: a, b and c.

The protein resides in the cell membrane. Functionally, produces ATP from ADP in the presence of a proton gradient across the membrane. The gamma chain is believed to be important in regulating ATPase activity and the flow of protons through the CF(0) complex. The chain is ATP synthase gamma chain from Desulforamulus reducens (strain ATCC BAA-1160 / DSM 100696 / MI-1) (Desulfotomaculum reducens).